The following is a 169-amino-acid chain: Peptide deformylase (169 aa).

Fe cation contacts are provided by cysteine 91 and histidine 133. Glutamate 134 is a catalytic residue. Fe cation is bound at residue histidine 137.

The protein belongs to the polypeptide deformylase family. It depends on Fe(2+) as a cofactor.

The enzyme catalyses N-terminal N-formyl-L-methionyl-[peptide] + H2O = N-terminal L-methionyl-[peptide] + formate. In terms of biological role, removes the formyl group from the N-terminal Met of newly synthesized proteins. Requires at least a dipeptide for an efficient rate of reaction. N-terminal L-methionine is a prerequisite for activity but the enzyme has broad specificity at other positions. This chain is Peptide deformylase, found in Salmonella arizonae (strain ATCC BAA-731 / CDC346-86 / RSK2980).